We begin with the raw amino-acid sequence, 224 residues long: Germin-like protein 8-12 (224 aa).

An N-terminal signal peptide occupies residues 1-23 (MASSSLFLLGALLVLASWQAIVA). An intrachain disulfide couples C33 to C48. The Cupin type-1 domain maps to 60–213 (FNAAKFDMPR…AFQVEKKLID (154 aa)). N78 carries an N-linked (GlcNAc...) asparagine glycan. The Mn(2+) site is built by H111, H113, E118, and H158.

It belongs to the germin family. In terms of assembly, oligomer (believed to be a pentamer but probably hexamer).

It is found in the secreted. The protein resides in the extracellular space. Its subcellular location is the apoplast. Functionally, plays a role in broad-spectrum disease resistance. Probably has no oxalate oxidase activity even if the active site is conserved. The polypeptide is Germin-like protein 8-12 (Oryza sativa subsp. japonica (Rice)).